The following is a 686-amino-acid chain: XK-related protein 5 (686 aa).

The next 5 helical transmembrane spans lie at 33 to 53 (LLWG…QALS), 205 to 225 (HFWV…WLVA), 239 to 259 (LFNL…WDSP), 265 to 285 (VTFY…ATDF), and 297 to 317 (IAGV…YYSL). 3 disordered regions span residues 340-362 (DKTE…ESSG), 444-470 (LQRK…NSSA), and 490-589 (FASD…VGLA). Composition is skewed to polar residues over residues 455-470 (LPSS…NSSA) and 490-509 (FASD…TQGE). Gly residues predominate over residues 523 to 536 (QGKGTGGQQRGGEG). A compositionally biased stretch (polar residues) spans 550 to 567 (VATSSQQEGSPATLQTAH).

The protein belongs to the XK family.

The protein localises to the cell membrane. In Pan troglodytes (Chimpanzee), this protein is XK-related protein 5.